The sequence spans 574 residues: K(+)/H(+) antiporter NhaP2 (574 aa).

Helical transmembrane passes span 6-26, 34-54, 58-78, 87-107, 109-129, 173-193, 196-216, 219-239, 242-262, 271-291, 299-319, 335-355, and 359-379; these read INSFFLIGALLAAVSVLLSPV, ILLIFLAVGILAGEDGPGGIL, YSTAYLVSNLALAIILLDGGM, VALWPALSLATFGVAITTSIT, VMAAWLFDLHWLQGLLVGAIV, IAILGNVDAELSASFMLISFI, FGLGIFLGLGGGWLLWKLVNL, LAEGLYSILVLSGGLMIYAAS, LGGSGILSIYLVGLFLGNKPT, VLDGMTWVSQIGMFLVLGLLL, IWLPGLALAFGMILFARPLAV, WFISWVGLRGAVPIILAVFPM, and LPGAQLYFNLAFFVVLVSLLV. The RCK C-terminal domain occupies 405 to 486; that stretch reads SGVEIYPSSE…LEALSNLFSQ (82 aa).

This sequence belongs to the monovalent cation:proton antiporter 1 (CPA1) transporter (TC 2.A.36) family. NhaP2 subfamily.

It is found in the cell inner membrane. The enzyme catalyses K(+)(in) + H(+)(out) = K(+)(out) + H(+)(in). In terms of biological role, k(+)/H(+) antiporter that extrudes potassium in exchange for external protons and maintains the internal concentration of potassium under toxic levels. This Shewanella sp. (strain MR-7) protein is K(+)/H(+) antiporter NhaP2.